Here is a 606-residue protein sequence, read N- to C-terminus: MLHTAIPCWQPFLGLAVVLLLMGSTIGCPARCECSAQNKSVSCHRRRLLAIPEGIPIETKILDLSKNRLKSINPEEFISYPLLEEIDLSDNIIANVEPGAFNNLFNLRSLRLKGNRLKLVPLGVFTGLSNLTKLDISENKIVILLDYMFQDLHNLKSLEVGDNDLVYISHRAFSGLLSLEQLTLEKCNLTAVPTEALSHLRSLIALHLKHLNINNMPVYAFKRLFHLKNLEIDYWPLLDLMPANSLYGLNLTSLSITNTNLSTVPFLAFKHLVYLTHLNLSYNPISTIEAGMFSDLIRLQELHIVGAQLRTIEPHSFQGLRFLRVLNVSQNLLETLEENVFSSPRALEVLSINNNPLACDCRLLWLLQRQPNLQFGGQQPMCAGPDTIRERSFKDFHSTALSFYFTCKKPKIREKKLQHLLVDEGQTVQLECNADGDPQPVISWVTPRRRFITTKSNGRATVLGDGTLEIRFAQDQDSGMYVCIASNAAGNDTFTASLTVKGFTSDRFLYANRTPMYMTDSNDTVSNGTNANTFSLDLKTILVSTAMGCFTFLGVVLFCFLLLFVWSRGKGKHKNSIDLEYVPRKNNGAVVEGEVAGPRRFNMKMI.

A signal peptide spans M1–G27. The 30-residue stretch at C28–I57 folds into the LRRNT domain. Residues C28–T545 lie on the Extracellular side of the membrane. The N-linked (GlcNAc...) asparagine glycan is linked to N38. LRR repeat units follow at residues E58–S79, L82–N103, N106–G127, N130–D151, N154–G175, S178–H199, S202–R223, H226–Y247, N250–H271, Y274–D295, R298–G319, and F322–S343. The N-linked (GlcNAc...) asparagine glycan is linked to N130. N-linked (GlcNAc...) asparagine glycosylation occurs at N188. 3 N-linked (GlcNAc...) asparagine glycosylation sites follow: N250, N260, and N279. N-linked (GlcNAc...) asparagine glycosylation occurs at N327. Residues N355 to K409 enclose the LRRCT domain. The cysteines at positions 432 and 483 are disulfide-linked. N491, N522, and N527 each carry an N-linked (GlcNAc...) asparagine glycan. The helical transmembrane segment at A546 to W566 threads the bilayer. Residues S567 to I606 lie on the Cytoplasmic side of the membrane.

It localises to the membrane. In Mus musculus (Mouse), this protein is Leucine-rich repeat and immunoglobulin-like domain-containing nogo receptor-interacting protein 2 (Lingo2).